Here is a 267-residue protein sequence, read N- to C-terminus: MTSVSDCFQSLRDRRQCALIPFITAGDPDLETTAKALRLLDASGADLIELGVPYSDPLADGPVIQAAATRALGRGVKLEDVLGVVKEVSPEIKAPIILFTYYNPIFYRGVEAFLQQVKAAGVQGLVVPDLPLEEAESLLKPAHEVGIAVTLLVAPTSPIERIEAIARQSQGFIYLVSVTGVTGMRSQVTSRVKELLTSLRSATDKPIGVGFGISKPEHALQVKNWGADAVIVGSAMVKRLAEGTPEEGLKAIGAFCQDLKQALKEDQ.

Catalysis depends on proton acceptor residues E49 and D60.

Belongs to the TrpA family. Tetramer of two alpha and two beta chains.

It catalyses the reaction (1S,2R)-1-C-(indol-3-yl)glycerol 3-phosphate + L-serine = D-glyceraldehyde 3-phosphate + L-tryptophan + H2O. Its pathway is amino-acid biosynthesis; L-tryptophan biosynthesis; L-tryptophan from chorismate: step 5/5. Its function is as follows. The alpha subunit is responsible for the aldol cleavage of indoleglycerol phosphate to indole and glyceraldehyde 3-phosphate. The polypeptide is Tryptophan synthase alpha chain (Rippkaea orientalis (strain PCC 8801 / RF-1) (Cyanothece sp. (strain PCC 8801))).